A 308-amino-acid chain; its full sequence is Endonuclease G, mitochondrial (308 aa).

The active-site Proton acceptor is the His148. Asn180 lines the Mg(2+) pocket.

It belongs to the DNA/RNA non-specific endonuclease family. As to quaternary structure, homodimer; disulfide-linked. Interacts with crn-5, crn-4, crn-1 and cyn-13. The cofactor is Mg(2+).

The protein resides in the mitochondrion. In terms of biological role, endonuclease important for programmed cell death; it mediates apoptotic DNA fragmentation. In Caenorhabditis elegans, this protein is Endonuclease G, mitochondrial (cps-6).